The chain runs to 546 residues: MSASASLSAGSDASGPGSPAGDQGNALPQLDSLISHLVAAKRSLSSINHVWRANEIVTSARSALEESVVISARTGFLRRGLNNQLRLLYSVRSEVEEVSLRGRSEFASVLKSLDTADARLRKTLDSLRDTIVHASFRPEGEEPRSLHDFVDERGVEELRAALKSSIDRTNEAQAELDTSNSAFDDELQSIKQALGNYREATKLASSSSSSSSASNSSLPSLSSMPPMLQSLEMHAQEMANLLESLVQHFDLCVTAVKHTEGGGAAARSITGDMPAAVTVSGRGVPNIEQGIHDNLNAPLDPLSESDYQEMVNVLIKDAAEAEDVVMEIQDRIGDMESILENILSQRDVLLSIYNATIGVFRHLSSLATARLPGYIAQAHSFTRVWGEEHDRINGGLADLSDLNTLYDGFLEAYDGLILEVARRRHVRQRVEKVLRETKHKLDQLYEEDVNARETFRVEQGDYLPSDIWPGIGREPMRIEFRRISGGILKGAPPEQPDAQDQPAAEPNEPQSGPSETTEEGEIIPHLPKSLVEEALHRLKARNRQAM.

The span at 1-22 (MSASASLSAGSDASGPGSPAGD) shows a compositional bias: low complexity. Disordered regions lie at residues 1–26 (MSAS…QGNA) and 204–225 (ASSS…SSMP). Coiled coils occupy residues 312–341 (NVLI…ILEN) and 424–447 (RHVR…LYEE). The tract at residues 487-527 (ILKGAPPEQPDAQDQPAAEPNEPQSGPSETTEEGEIIPHLP) is disordered. Residues 496 to 506 (PDAQDQPAAEP) show a composition bias toward low complexity.

It belongs to the ATG17 family.

Its subcellular location is the cytoplasm. It is found in the preautophagosomal structure membrane. Functionally, autophagy-specific protein that functions in response to autophagy-inducing signals as a scaffold to recruit other ATG proteins to organize pre-autophagosomal structure (PAS) formation. Modulates the timing and magnitude of the autophagy response, such as the size of the sequestering vesicles. Plays particularly a role in pexophagy and nucleophagy. The chain is Autophagy-related protein 17 (atg17) from Aspergillus niger (strain ATCC MYA-4892 / CBS 513.88 / FGSC A1513).